The following is a 424-amino-acid chain: 26S proteasome regulatory subunit 4 homolog (424 aa).

Positions 1-11 are enriched in basic and acidic residues; that stretch reads MSRDKSERDNL. The tract at residues 1 to 33 is disordered; it reads MSRDKSERDNLQDTTTINLRRRRRVKEGKAASK. Residue 210 to 217 coordinates ATP; sequence GLPGTGKT.

It belongs to the AAA ATPase family. As to quaternary structure, the 26S proteasome consists of a 20S proteasome core and two 19S regulatory subunits. The 20S proteasome core is composed of 28 subunits that are arranged in four stacked rings, resulting in a barrel-shaped structure. The two end rings are each formed by seven alpha subunits, and the two central rings are each formed by seven beta subunits. The catalytic chamber with the active sites is on the inside of the barrel.

The protein resides in the cytoplasm. It localises to the nucleus. Functionally, acts as a regulatory subunit of the 26S proteasome which degrades poly-ubiquitinated proteins in the cytoplasm and in the nucleus. It is essential for the regulated turnover of proteins and for the removal of misfolded proteins. The proteasome is a multicatalytic proteinase complex that is characterized by its ability to cleave peptides with Arg, Phe, Tyr, Leu, and Glu adjacent to the leaving group at neutral or slightly basic pH. This is 26S proteasome regulatory subunit 4 homolog (RPT2) from Encephalitozoon cuniculi (strain GB-M1) (Microsporidian parasite).